The sequence spans 931 residues: MKKNFEVFDFKEEDELAESAAGKLLEKFTNPSPCNSPVLQRQRIQSFCNEKRVEEEEMEGPSCAEPATAVESDDHQCEDDSTLVTEAKESRTILTFGLETTDHLEETDAEHVNQGLMLGLKTEDLAKETDIDHDNHGLMFGLNSEDDIEETDVDHRVESFSCQLGGNSFYAETSSYSQRQLNSPFSDSSSSEEQIDMMSAIDESLSDRSALSEASDSEDDEEDWMTEHCFNDEEKIDLSTAVIMTSEYVILKDMHCAASLVIFSCNGIKIKSFLANNEEVPFSCEFGVEDIVSIQYNWYQNVGLIILRIRVLLKDENCHEDMEELKIAVKEHNWPNKQQKINSLHVKYPAVWNTDLEDDVEVSGYNLNQQKRYFPSFDEPFEDVVYPKGDPDAVSICKRDVELLQPETFVNDTIIDFYINYLKNQIQTEEKHRFHFFNSFFFRKLADLDKDPSSIADGKAAFLRVRKWTRKVDMFGKDYIFVPVNYNLHWSLIVICHPGEVANRTDLDLDDSKKVPCILHMDSIKGSHAGLKNLVQTYLCEEWKERHKETSDDISSRFMNLRFVSLELPQQENSFDCGLFLLHYLELFLAEAPLNFSPFKIYNASNFLYLNWFPPAEASLKRTLIQKLIFELLENRSREVSNEQNQSCESPVAVNDDMGIEVLSERCSPLIDCNGDMTQTQDDQGIEMTLLERSSMRHIQAANDSGMVLRDLFDSGSNNTGSLLEQLQQPFEDPSSFYHLSNDSSAREQVDMETGEQFMCLNAGEGNFQCITETTSPRASNSFSSWNLGIPLVQKEDETDLLSETSNSSNDSIGIIEDNPIENTHEEEIDESPPRETVSLKSATVGSNTADHTTENEEPVSTHIELVVPSSQNDRDEEKPLEHDLEIGDKTSEDVGDDCDQKEPMEEEDEKRAAKRPRLSSPTGEAEEMEK.

Residues 204-224 (SLSDRSALSEASDSEDDEEDW) form a disordered region. A compositionally biased stretch (acidic residues) spans 215 to 224 (SDSEDDEEDW). Catalysis depends on residues H489, D522, and C577. The interval 825–931 (HEEEIDESPP…PTGEAEEMEK (107 aa)) is disordered. The segment covering 839 to 851 (SLKSATVGSNTAD) has biased composition (polar residues). The segment covering 873 to 904 (NDRDEEKPLEHDLEIGDKTSEDVGDDCDQKEP) has biased composition (basic and acidic residues).

It belongs to the peptidase C48 family.

Functionally, protease that catalyzes two essential functions in the SUMO pathway: processing of full-length SUMOs to their mature forms and deconjugation of SUMO from targeted proteins. This is Probable ubiquitin-like-specific protease 2B (ULP2B) from Arabidopsis thaliana (Mouse-ear cress).